Consider the following 207-residue polypeptide: Casparian strip membrane protein 1 (207 aa).

N-acetylalanine is present on A2. Topologically, residues 2-44 (AKESTTIDVGEPNTMTKSTSHVVVDEKKKKGFVAAAAGGGYKR) are cytoplasmic. A helical transmembrane segment spans residues 45–65 (GLAVFDFLLRLAAIGITIGAS). Residues 66-95 (SVMFTAEETLPFFTQFLQFQAGYDDFPTFQ) lie on the Extracellular side of the membrane. A helical membrane pass occupies residues 96-116 (FFVIAIAIVASYLVLSLPFSI). Topologically, residues 117-128 (VTIVRPLAVAPR) are cytoplasmic. A helical transmembrane segment spans residues 129–149 (LILLISDTVVLTLTTAAAAAA). Over 150–181 (ASIVYLAHNGNTNTNWLPICQQFGDFCQTAST) the chain is Extracellular. Residues 182–202 (AVVAASISVAFFVLLIVISAI) form a helical membrane-spanning segment. Over 203-207 (ALKRH) the chain is Cytoplasmic.

This sequence belongs to the Casparian strip membrane proteins (CASP) family. In terms of assembly, homodimer and heterodimers.

The protein localises to the cell membrane. Functionally, regulates membrane-cell wall junctions and localized cell wall deposition. Required for establishment of the Casparian strip membrane domain (CSD) and the subsequent formation of Casparian strips, a cell wall modification of the root endodermis that determines an apoplastic barrier between the intraorganismal apoplasm and the extraorganismal apoplasm and prevents lateral diffusion. The sequence is that of Casparian strip membrane protein 1 from Raphanus raphanistrum (Wild radish).